Here is a 352-residue protein sequence, read N- to C-terminus: Rhodopsin, freshwater form (352 aa).

At 1 to 36 (MNGTEGPNFYVPMSNVTGVVRSPFEYPQYYLAEPWA) the chain is on the extracellular side. Residues Asn2 and Asn15 are each glycosylated (N-linked (GlcNAc...) asparagine). The chain crosses the membrane as a helical span at residues 37–61 (YSALAAYMFFLIIAGFPINFLTLYV). Topologically, residues 62-73 (TIEHKKLRTPLN) are cytoplasmic. The helical transmembrane segment at 74-98 (YILLNLAVADLFMVFGGFTTTMYTS) threads the bilayer. Topologically, residues 99–113 (MHGYFVFGPTGCNIE) are extracellular. Cys110 and Cys187 form a disulfide bridge. The helical transmembrane segment at 114–133 (GFFATLGGEIALWCLVVLAV) threads the bilayer. The Cytoplasmic portion of the chain corresponds to 134–152 (ERWMVVCKPMSNFRFGENH). A helical membrane pass occupies residues 153–176 (AIMGVAFTWVMALACAAPPLFGWS). Residues 177–202 (RYIPEGMQCSCGMDHYAPNPETYNES) lie on the Extracellular side of the membrane. Asn200 carries an N-linked (GlcNAc...) asparagine glycan. Residues 203 to 230 (FVIYMFICHFTIPLTVISFCYGRLVCTV) traverse the membrane as a helical segment. At 231 to 252 (KEATAQQQESETTQRAEREVTR) the chain is on the cytoplasmic side. Residues 253–276 (MVIIMVISFLVCWVPYASVAWYIF) traverse the membrane as a helical segment. The Extracellular portion of the chain corresponds to 277–284 (THQGSSFG). The helical transmembrane segment at 285 to 309 (PIFMTIPAFFAKSSSLYNPLIYICM) threads the bilayer. Lys296 is subject to N6-(retinylidene)lysine. The Cytoplasmic portion of the chain corresponds to 310–352 (NKQSRNCMITTLCCGKNPFEEEEGASTTASKTEASSVSSVSPA). Cys323 carries the S-palmitoyl cysteine lipid modification. The tract at residues 330 to 352 (EEEGASTTASKTEASSVSSVSPA) is disordered. Low complexity predominate over residues 334–352 (ASTTASKTEASSVSSVSPA).

This sequence belongs to the G-protein coupled receptor 1 family. Opsin subfamily. Phosphorylated on some or all of the serine and threonine residues present in the C-terminal region. As to expression, rod shaped photoreceptor cells which mediates vision in dim light.

The protein resides in the membrane. Visual pigments such as rhodopsin and porphyropsin are light-absorbing molecules that mediate vision. Rhodopsin consists of an apoprotein, opsin, covalently linked to 11-cis-retinal. This receptor is coupled to the activation of phospholipase C. Porphyropsin consists of opsin covalently linked to 11-cis 3,4-didehydroretinal. The protein is Rhodopsin, freshwater form of Anguilla anguilla (European freshwater eel).